Consider the following 101-residue polypeptide: UPF0473 protein str1961 (101 aa).

This sequence belongs to the UPF0473 family.

This Streptococcus thermophilus (strain CNRZ 1066) protein is UPF0473 protein str1961.